Here is a 422-residue protein sequence, read N- to C-terminus: Serine--tRNA ligase (422 aa).

229 to 231 provides a ligand contact to L-serine; sequence TAE. Residue 260–262 coordinates ATP; that stretch reads RAE. An L-serine-binding site is contributed by Glu-283. 347–350 contacts ATP; the sequence is EISS. An L-serine-binding site is contributed by Ser-383.

The protein belongs to the class-II aminoacyl-tRNA synthetase family. Type-1 seryl-tRNA synthetase subfamily. Homodimer. The tRNA molecule binds across the dimer.

The protein resides in the cytoplasm. The enzyme catalyses tRNA(Ser) + L-serine + ATP = L-seryl-tRNA(Ser) + AMP + diphosphate + H(+). It carries out the reaction tRNA(Sec) + L-serine + ATP = L-seryl-tRNA(Sec) + AMP + diphosphate + H(+). It participates in aminoacyl-tRNA biosynthesis; selenocysteinyl-tRNA(Sec) biosynthesis; L-seryl-tRNA(Sec) from L-serine and tRNA(Sec): step 1/1. Catalyzes the attachment of serine to tRNA(Ser). Is also able to aminoacylate tRNA(Sec) with serine, to form the misacylated tRNA L-seryl-tRNA(Sec), which will be further converted into selenocysteinyl-tRNA(Sec). The protein is Serine--tRNA ligase of Halothermothrix orenii (strain H 168 / OCM 544 / DSM 9562).